The sequence spans 87 residues: Large ribosomal subunit protein bL27 (87 aa).

The tract at residues 1 to 20 (MARKRGGSGSKNGRDSNPKY) is disordered.

It belongs to the bacterial ribosomal protein bL27 family.

The polypeptide is Large ribosomal subunit protein bL27 (rpmA) (Treponema pallidum (strain Nichols)).